A 528-amino-acid chain; its full sequence is Protein MGF 505-7R (528 aa).

This sequence belongs to the asfivirus MGF 505 family. Interacts with host STING1. Interacts with host JAK1; this interaction leads to JAK1 degradation. Interacts with host JAK2; this interaction leads to JAK2 degradation. Interacts with host RELA; this interaction inhibits NF-kappa-B promoter activity.

The protein localises to the host cytoplasm. Its function is as follows. Plays a role in virus cell tropism, and may be required for efficient virus replication in macrophages. Interferes with host NF-kappa-B promoter activity mediated by TLR8. Mechanistically, inhibits the phosphorylation and subsequent nuclear translocation of host NF-kappa-B RELA subunit downstream of TLR8. Promotes the expression of the autophagy-related protein host ULK1 to degrade host STING and inhibit the interferon response. Also inhibits JAK1- and JAK2-mediated signaling and thus negatively regulates the IFN-gamma signaling. The chain is Protein MGF 505-7R from African swine fever virus (isolate Pig/Kenya/KEN-50/1950) (ASFV).